Reading from the N-terminus, the 342-residue chain is Phenylalanine--tRNA ligase alpha subunit (342 aa).

Mg(2+) is bound at residue E257.

It belongs to the class-II aminoacyl-tRNA synthetase family. Phe-tRNA synthetase alpha subunit type 1 subfamily. As to quaternary structure, tetramer of two alpha and two beta subunits. Requires Mg(2+) as cofactor.

The protein localises to the cytoplasm. It catalyses the reaction tRNA(Phe) + L-phenylalanine + ATP = L-phenylalanyl-tRNA(Phe) + AMP + diphosphate + H(+). The sequence is that of Phenylalanine--tRNA ligase alpha subunit from Legionella pneumophila subsp. pneumophila (strain Philadelphia 1 / ATCC 33152 / DSM 7513).